A 375-amino-acid polypeptide reads, in one-letter code: Ribosomal RNA large subunit methyltransferase F (375 aa).

Disordered stretches follow at residues 1-39 (MKNN…AAVK) and 262-281 (NQRK…GKPT). Positions 27–38 (AKPKRVKKKAAV) are enriched in basic residues.

This sequence belongs to the methyltransferase superfamily. METTL16/RlmF family.

It is found in the cytoplasm. The enzyme catalyses adenosine(1618) in 23S rRNA + S-adenosyl-L-methionine = N(6)-methyladenosine(1618) in 23S rRNA + S-adenosyl-L-homocysteine + H(+). Specifically methylates the adenine in position 1618 of 23S rRNA. The sequence is that of Ribosomal RNA large subunit methyltransferase F from Vibrio parahaemolyticus serotype O3:K6 (strain RIMD 2210633).